Here is a 224-residue protein sequence, read N- to C-terminus: 7-cyano-7-deazaguanine synthase (224 aa).

12-22 (LSGGLDSSTVT) lines the ATP pocket. Zn(2+) is bound by residues Cys193, Cys201, Cys204, and Cys207.

It belongs to the QueC family. It depends on Zn(2+) as a cofactor.

The enzyme catalyses 7-carboxy-7-deazaguanine + NH4(+) + ATP = 7-cyano-7-deazaguanine + ADP + phosphate + H2O + H(+). It functions in the pathway purine metabolism; 7-cyano-7-deazaguanine biosynthesis. Functionally, catalyzes the ATP-dependent conversion of 7-carboxy-7-deazaguanine (CDG) to 7-cyano-7-deazaguanine (preQ(0)). This is 7-cyano-7-deazaguanine synthase from Prochlorococcus marinus (strain MIT 9215).